Reading from the N-terminus, the 410-residue chain is D-amino acid dehydrogenase (410 aa).

9–14 (GGGIVG) is a binding site for FAD.

It belongs to the DadA oxidoreductase family. FAD is required as a cofactor.

The protein localises to the cell inner membrane. It carries out the reaction a D-alpha-amino acid + a quinone + H2O = a 2-oxocarboxylate + a quinol + NH4(+). In terms of biological role, catalyzes the oxidative deamination of D-amino acids. Has broad substrate specificity; is mostly active on D-proline, and to a lesser extent, on several other D-amino acids such as D-alanine, D-phenylalanine and D-serine. Mediates electron transport from D-proline to coenzyme Q1 in vitro, and is involved in the electron transport chain from D-proline to the c-type cytochrome in vivo. The protein is D-amino acid dehydrogenase of Helicobacter pylori (strain J99 / ATCC 700824) (Campylobacter pylori J99).